The primary structure comprises 325 residues: Beta-ketoacyl-[acyl-carrier-protein] synthase III (325 aa).

Catalysis depends on residues Cys119 and His252. An ACP-binding region spans residues 253–257; the sequence is QANIR. Asn282 is a catalytic residue.

It belongs to the thiolase-like superfamily. FabH family. As to quaternary structure, homodimer.

The protein resides in the cytoplasm. The catalysed reaction is malonyl-[ACP] + acetyl-CoA + H(+) = 3-oxobutanoyl-[ACP] + CO2 + CoA. It functions in the pathway lipid metabolism; fatty acid biosynthesis. In terms of biological role, catalyzes the condensation reaction of fatty acid synthesis by the addition to an acyl acceptor of two carbons from malonyl-ACP. Catalyzes the first condensation reaction which initiates fatty acid synthesis and may therefore play a role in governing the total rate of fatty acid production. Possesses both acetoacetyl-ACP synthase and acetyl transacylase activities. Its substrate specificity determines the biosynthesis of branched-chain and/or straight-chain of fatty acids. The protein is Beta-ketoacyl-[acyl-carrier-protein] synthase III of Acidovorax ebreus (strain TPSY) (Diaphorobacter sp. (strain TPSY)).